We begin with the raw amino-acid sequence, 145 residues long: Large ribosomal subunit protein uL15 (145 aa).

Positions 1–42 are disordered; that stretch reads MELHTLKATPGSRKAKHRVGRGHAAGKGKQAGRGQSGQTKRS. Residues 13–26 are compositionally biased toward basic residues; sequence RKAKHRVGRGHAAG.

Belongs to the universal ribosomal protein uL15 family. Part of the 50S ribosomal subunit.

Its function is as follows. Binds to the 23S rRNA. The protein is Large ribosomal subunit protein uL15 of Metamycoplasma arthritidis (strain 158L3-1) (Mycoplasma arthritidis).